A 586-amino-acid polypeptide reads, in one-letter code: Proline--tRNA ligase (586 aa).

It belongs to the class-II aminoacyl-tRNA synthetase family. ProS type 1 subfamily. As to quaternary structure, homodimer.

The protein localises to the cytoplasm. It carries out the reaction tRNA(Pro) + L-proline + ATP = L-prolyl-tRNA(Pro) + AMP + diphosphate. In terms of biological role, catalyzes the attachment of proline to tRNA(Pro) in a two-step reaction: proline is first activated by ATP to form Pro-AMP and then transferred to the acceptor end of tRNA(Pro). As ProRS can inadvertently accommodate and process non-cognate amino acids such as alanine and cysteine, to avoid such errors it has two additional distinct editing activities against alanine. One activity is designated as 'pretransfer' editing and involves the tRNA(Pro)-independent hydrolysis of activated Ala-AMP. The other activity is designated 'posttransfer' editing and involves deacylation of mischarged Ala-tRNA(Pro). The misacylated Cys-tRNA(Pro) is not edited by ProRS. The chain is Proline--tRNA ligase from Kineococcus radiotolerans (strain ATCC BAA-149 / DSM 14245 / SRS30216).